The following is an 872-amino-acid chain: Cellulose synthase catalytic subunit [UDP-forming] (872 aa).

4 consecutive transmembrane segments (helical) span residues 30 to 50 (SAFSATLGCFWMILAWIFIPL), 151 to 171 (ILGIIVTFSLILALICVTQPF), 173 to 193 (PLAQFIFLMLLWGGALIVRRM), and 230 to 250 (LVCGLILLFAETYAWIVLVLG). Positions 271–364 (LWPSVDIFVP…FVSIFDCDHV (94 aa)) are catalytic subdomain A. Residue Asp313 is part of the active site. The substrate site is built by Asp360 and Asp362. The tract at residues 441 to 501 (KPLDEIGGIA…GQRIRWARGM (61 aa)) is catalytic subdomain B. Asp457 is a catalytic residue. Helical transmembrane passes span 525–545 (VNAMFHFLSGIPRLIFLTAPL), 547–567 (FLLLHAYIIYAPALMIALFVL), 592–612 (IYETVLAWYIAPPTLVALINP), 640–660 (IFLVLLNLVGVAVGIWRYFYG), and 668–688 (VVVSMVWVFYNLIVLGGAVAV). Positions 694-790 (QVRRSHRVEM…QHIDFVQCTF (97 aa)) constitute a PilZ domain. The helical transmembrane segment at 833 to 853 (SVKGIFRVLTSLVSWVVSFIP) threads the bilayer.

The protein belongs to the glycosyltransferase 2 family. The cofactor is Mg(2+).

It is found in the cell inner membrane. The enzyme catalyses [(1-&gt;4)-beta-D-glucosyl](n) + UDP-alpha-D-glucose = [(1-&gt;4)-beta-D-glucosyl](n+1) + UDP + H(+). The protein operates within glycan metabolism; bacterial cellulose biosynthesis. With respect to regulation, activated by bis-(3'-5') cyclic diguanylic acid (c-di-GMP). Catalytic subunit of cellulose synthase. It polymerizes uridine 5'-diphosphate glucose to cellulose, which is produced as an extracellular component for mechanical and chemical protection at the onset of the stationary phase, when the cells exhibit multicellular behavior (rdar morphotype). Coexpression of cellulose and thin aggregative fimbriae leads to a hydrophobic network with tightly packed cells embedded in a highly inert matrix. The sequence is that of Cellulose synthase catalytic subunit [UDP-forming] (bcsA) from Escherichia coli O157:H7.